The following is a 653-amino-acid chain: Mediator of RNA polymerase II transcription subunit 17 (653 aa).

A disordered region spans residues 246–271 (SNESDEHIDSTTGHDIPGTSEKLSAS).

It belongs to the Mediator complex subunit 17 family. Component of the Mediator complex.

Its subcellular location is the nucleus. Its function is as follows. Component of the Mediator complex, a coactivator involved in the regulated transcription of nearly all RNA polymerase II-dependent genes. Mediator functions as a bridge to convey information from gene-specific regulatory proteins to the basal RNA polymerase II transcription machinery. The Mediator complex, having a compact conformation in its free form, is recruited to promoters by direct interactions with regulatory proteins and serves for the assembly of a functional preinitiation complex with RNA polymerase II and the general transcription factors. The protein is Mediator of RNA polymerase II transcription subunit 17 (MED17) of Arabidopsis thaliana (Mouse-ear cress).